The following is a 137-amino-acid chain: ATP synthase epsilon chain, chloroplastic (137 aa).

This sequence belongs to the ATPase epsilon chain family. F-type ATPases have 2 components, CF(1) - the catalytic core - and CF(0) - the membrane proton channel. CF(1) has five subunits: alpha(3), beta(3), gamma(1), delta(1), epsilon(1). CF(0) has three main subunits: a, b and c.

It localises to the plastid. The protein localises to the chloroplast thylakoid membrane. In terms of biological role, produces ATP from ADP in the presence of a proton gradient across the membrane. The protein is ATP synthase epsilon chain, chloroplastic of Pinus thunbergii (Japanese black pine).